Here is a 173-residue protein sequence, read N- to C-terminus: MVYFMFIMLVGLILGLMAVASNPSPYFAALGLVVAAGVGCGLLVGHGGSFLSLVLFLIYLGGMLVVFAYTAALAAEPYPETWGDWSVLLYVSVYLLGIFFVGKYFFKEWGGLGWVGVEEMSNLEMIRGDFGGVALLYANGGIMLVLGGWVLLLTLFVILELTRGLSYGTLRVV.

The next 5 helical transmembrane spans lie at 1–21 (MVYF…AVAS), 25–45 (PYFA…LLVG), 53–73 (LVLF…TAAL), 82–102 (WGDW…FFVG), and 141–161 (GIML…ILEL).

This sequence belongs to the complex I subunit 6 family.

It localises to the mitochondrion membrane. It carries out the reaction a ubiquinone + NADH + 5 H(+)(in) = a ubiquinol + NAD(+) + 4 H(+)(out). Core subunit of the mitochondrial membrane respiratory chain NADH dehydrogenase (Complex I) that is believed to belong to the minimal assembly required for catalysis. Complex I functions in the transfer of electrons from NADH to the respiratory chain. The immediate electron acceptor for the enzyme is believed to be ubiquinone. The polypeptide is NADH-ubiquinone oxidoreductase chain 6 (MT-ND6) (Squalus acanthias (Spiny dogfish)).